We begin with the raw amino-acid sequence, 327 residues long: Glycerol-3-phosphate dehydrogenase [NAD(P)+] (327 aa).

Phe14, Arg35, and Lys108 together coordinate NADPH. Residues Lys108 and Gly136 each coordinate sn-glycerol 3-phosphate. Position 140 (Ala140) interacts with NADPH. Residues Lys191, Asp244, Ser254, Arg255, and Asn256 each contribute to the sn-glycerol 3-phosphate site. The active-site Proton acceptor is Lys191. NADPH is bound at residue Arg255. Leu275 and Glu277 together coordinate NADPH.

It belongs to the NAD-dependent glycerol-3-phosphate dehydrogenase family.

Its subcellular location is the cytoplasm. The enzyme catalyses sn-glycerol 3-phosphate + NAD(+) = dihydroxyacetone phosphate + NADH + H(+). It carries out the reaction sn-glycerol 3-phosphate + NADP(+) = dihydroxyacetone phosphate + NADPH + H(+). The protein operates within membrane lipid metabolism; glycerophospholipid metabolism. Catalyzes the reduction of the glycolytic intermediate dihydroxyacetone phosphate (DHAP) to sn-glycerol 3-phosphate (G3P), the key precursor for phospholipid synthesis. This Agrobacterium fabrum (strain C58 / ATCC 33970) (Agrobacterium tumefaciens (strain C58)) protein is Glycerol-3-phosphate dehydrogenase [NAD(P)+].